We begin with the raw amino-acid sequence, 1362 residues long: ATP-dependent RNA helicase dhx29 (1362 aa).

Over residues 1–10 (MGGKNKKNRH) the composition is skewed to basic residues. Residues 1 to 76 (MGGKNKKNRH…FASSSDSGVS (76 aa)) are disordered. Over residues 18–27 (GATAAANRPR) the composition is skewed to low complexity. Residues 28-41 (AAAEPRPGGEDAAK) show a composition bias toward basic and acidic residues. Positions 66–76 (SFASSSDSGVS) are enriched in low complexity. Residues 89–109 (EAKLEKRIISLINEHKKLNSN) are a coiled coil. Disordered regions lie at residues 182-215 (QRARAKFQAPPQRPSAANESATEKGEEGASLKGN) and 229-257 (EQGSDDDDDDDDVKEEEKETTLEKFDPNE). Positions 231-242 (GSDDDDDDDDVK) are enriched in acidic residues. Basic and acidic residues predominate over residues 243 to 257 (EEEKETTLEKFDPNE). Residues 285-305 (QKEAQERIRGYQQEMKSLEDH) are a coiled coil. The interval 317–336 (VKSESKQPKPALPPSEDEPL) is disordered. One can recognise a Helicase ATP-binding domain in the interval 576–749 (LETLKRHRVI…FTHCPIIRIS (174 aa)). Residue 589–596 (GETGSGKS) coordinates ATP. The DEAH box signature appears at 696 to 699 (DEVH). The region spanning 852–1021 (DISPEYRNVE…ELCLHIMKCD (170 aa)) is the Helicase C-terminal domain.

The protein belongs to the DEAD box helicase family. DEAH subfamily. In terms of assembly, part of the 43S pre-initiation complex (PIC).

The protein localises to the cytoplasm. It catalyses the reaction ATP + H2O = ADP + phosphate + H(+). ATP-binding RNA helicase involved in translation initiation. Part of the 43S pre-initiation complex that is required for efficient initiation on mRNAs of higher eukaryotes with structured 5'-UTRs by promoting efficient NTPase-dependent 48S complex formation. Specifically binds to the 40S ribosome near the mRNA entrance. Does not possess a processive helicase activity. This chain is ATP-dependent RNA helicase dhx29, found in Xenopus laevis (African clawed frog).